Consider the following 213-residue polypeptide: Kiwellin (213 aa).

A signal peptide spans 1–24 (MAQLALLLLSLFLTLISLAPPGAS). Cystine bridges form between C28–C60, C32–C44, and C38–C49. 4-hydroxyproline is present on residues P65 and P67. Cystine bridges form between C72–C90, C80–C172, C119–C144, and C166–C172. The disordered stretch occupies residues 91 to 121 (SPPVTSSTPAKLTNNDFSEGGDDGGPSECDE). Polar residues predominate over residues 93-107 (PVTSSTPAKLTNNDF).

The protein belongs to the kiwellin family. Post-translationally, undergoes proteolytic cleavage by actinidin to produce kissper and KiTH. Three forms of KiTH are produced by cleavage at different sites, the main form produced in vivo is KiTH-1.

It is found in the secreted. Its function is as follows. pH-dependent, voltage-gated and anion-selective pore-forming peptide. This is Kiwellin from Actinidia deliciosa (Kiwi).